Consider the following 432-residue polypeptide: Adenylosuccinate synthetase (432 aa).

Residues 12–18 and 40–42 each bind GTP; these read GDEGKGK and GHT. Aspartate 13 serves as the catalytic Proton acceptor. Positions 13 and 40 each coordinate Mg(2+). IMP is bound by residues 13–16, 38–41, threonine 129, arginine 143, glutamine 224, threonine 239, and arginine 303; these read DEGK and NAGH. Catalysis depends on histidine 41, which acts as the Proton donor. 299–305 is a substrate binding site; sequence VTTGRRR. GTP contacts are provided by residues arginine 305, 331-333, and 413-415; these read KLD and GVG.

This sequence belongs to the adenylosuccinate synthetase family. Homodimer. It depends on Mg(2+) as a cofactor.

It localises to the cytoplasm. It catalyses the reaction IMP + L-aspartate + GTP = N(6)-(1,2-dicarboxyethyl)-AMP + GDP + phosphate + 2 H(+). It functions in the pathway purine metabolism; AMP biosynthesis via de novo pathway; AMP from IMP: step 1/2. Functionally, plays an important role in the de novo pathway of purine nucleotide biosynthesis. Catalyzes the first committed step in the biosynthesis of AMP from IMP. This Mycobacterium marinum (strain ATCC BAA-535 / M) protein is Adenylosuccinate synthetase.